The primary structure comprises 160 residues: Small ribosomal subunit protein bS6 (160 aa).

A disordered region spans residues 100–160 (PSSVLARKSD…DDARETAGAE (61 aa)). Composition is skewed to basic and acidic residues over residues 106–116 (RKSDDRGDRGN) and 136–160 (RSSE…AGAE).

This sequence belongs to the bacterial ribosomal protein bS6 family.

In terms of biological role, binds together with bS18 to 16S ribosomal RNA. The sequence is that of Small ribosomal subunit protein bS6 from Gluconobacter oxydans (strain 621H) (Gluconobacter suboxydans).